A 352-amino-acid chain; its full sequence is MTIAIGKAEEERGVFDIIDDWLRRDRFVFIGWSGLLLFPCAYLALGGWLTGTTFVTSWYTHGLASSYLEGCNFLTAAVSTPSNAVGHSLLFLWGLEAQGNFTRWCQLGGLWPFVALHGSFALIGFMLRQFEIAQSVRLRPYNAIAFSGPISVFVSVFLIYPLGQSGWFFAPSFGVAAIFRFILFFQGFHNWTLNPFHMMGVAGVLGAALLCAIHGATVENTLFEDGDGANTFRAFNPTQQEETYSMVTANRFWSQIFGVAFSNKRWLHFFMLFVPVTGLWMSALGVVGLALNLRAYDFVSQEIRAAEDPEFETFYTKNILLNEGIRAWMVAQDQPHEKIVFPEEVLPRGNAL.

Residues 40–60 (CAYLALGGWLTGTTFVTSWYT) form a helical membrane-spanning segment. Chlorophyll a is bound at residue histidine 117. Residues 124 to 140 (GFMLRQFEIAQSVRLRP) form a helical membrane-spanning segment. Residues glutamine 129 and asparagine 142 each coordinate pheophytin a. A helical transmembrane segment spans residues 152-165 (VFVSVFLIYPLGQS). Histidine 197 is a binding site for chlorophyll a. A helical transmembrane segment spans residues 207–227 (AALLCAIHGATVENTLFEDGD). Residues histidine 214 and phenylalanine 261 each contribute to the a plastoquinone site. Histidine 214 contributes to the Fe cation binding site. Histidine 268 is a binding site for Fe cation. Residues 278–294 (GLWMSALGVVGLALNLR) traverse the membrane as a helical segment.

The protein belongs to the reaction center PufL/M/PsbA/D family. PSII is composed of 1 copy each of membrane proteins PsbA, PsbB, PsbC, PsbD, PsbE, PsbF, PsbH, PsbI, PsbJ, PsbK, PsbL, PsbM, PsbT, PsbY, PsbZ, Psb30/Ycf12, at least 3 peripheral proteins of the oxygen-evolving complex and a large number of cofactors. It forms dimeric complexes. The D1/D2 heterodimer binds P680, chlorophylls that are the primary electron donor of PSII, and subsequent electron acceptors. It shares a non-heme iron and each subunit binds pheophytin, quinone, additional chlorophylls, carotenoids and lipids. There is also a Cl(-1) ion associated with D1 and D2, which is required for oxygen evolution. The PSII complex binds additional chlorophylls, carotenoids and specific lipids. is required as a cofactor.

The protein resides in the plastid. It is found in the chloroplast thylakoid membrane. The enzyme catalyses 2 a plastoquinone + 4 hnu + 2 H2O = 2 a plastoquinol + O2. In terms of biological role, photosystem II (PSII) is a light-driven water:plastoquinone oxidoreductase that uses light energy to abstract electrons from H(2)O, generating O(2) and a proton gradient subsequently used for ATP formation. It consists of a core antenna complex that captures photons, and an electron transfer chain that converts photonic excitation into a charge separation. The D1/D2 (PsbA/PsbD) reaction center heterodimer binds P680, the primary electron donor of PSII as well as several subsequent electron acceptors. D2 is needed for assembly of a stable PSII complex. The polypeptide is Photosystem II D2 protein (Bigelowiella natans (Pedinomonas minutissima)).